Here is a 274-residue protein sequence, read N- to C-terminus: Penicillin-insensitive murein endopeptidase (274 aa).

Positions 1–19 (MNKTAIALLALLASSVSLA) are cleaved as a signal peptide. 3 disulfides stabilise this stretch: Cys-44-Cys-265, Cys-187-Cys-235, and Cys-216-Cys-223. Residues His-110, His-113, Asp-120, Asp-147, His-150, and His-211 each coordinate Zn(2+). Residues 227–274 (PLPPPGDGCGAELQSWFEPPKPGTTKPEKKTPPPLPPSCQALLDEHVI) form a disordered region.

It belongs to the peptidase M74 family. As to quaternary structure, dimer. Zn(2+) is required as a cofactor.

The protein resides in the periplasm. Murein endopeptidase that cleaves the D-alanyl-meso-2,6-diamino-pimelyl amide bond that connects peptidoglycan strands. Likely plays a role in the removal of murein from the sacculus. The polypeptide is Penicillin-insensitive murein endopeptidase (Shigella dysenteriae serotype 1 (strain Sd197)).